The chain runs to 706 residues: Elongation factor G (706 aa).

A tr-type G domain is found at 8–297; it reads SYVRNIGIGA…AVVDYLPSPN (290 aa). Residues 17 to 24, 95 to 99, and 149 to 152 contribute to the GTP site; these read AHIDAGKT, DTPGH, and NKMD.

Belongs to the TRAFAC class translation factor GTPase superfamily. Classic translation factor GTPase family. EF-G/EF-2 subfamily.

Its subcellular location is the cytoplasm. In terms of biological role, catalyzes the GTP-dependent ribosomal translocation step during translation elongation. During this step, the ribosome changes from the pre-translocational (PRE) to the post-translocational (POST) state as the newly formed A-site-bound peptidyl-tRNA and P-site-bound deacylated tRNA move to the P and E sites, respectively. Catalyzes the coordinated movement of the two tRNA molecules, the mRNA and conformational changes in the ribosome. The polypeptide is Elongation factor G (Orientia tsutsugamushi (strain Boryong) (Rickettsia tsutsugamushi)).